The primary structure comprises 969 residues: Protein translocase subunit SecA (969 aa).

ATP contacts are provided by residues glutamine 99, 117–121 (GEGKT), and aspartate 631.

The protein belongs to the SecA family. Monomer and homodimer. Part of the essential Sec protein translocation apparatus which comprises SecA, SecYEG and auxiliary proteins SecDF. Other proteins may also be involved.

It is found in the cell inner membrane. The protein resides in the cytoplasm. The catalysed reaction is ATP + H2O + cellular proteinSide 1 = ADP + phosphate + cellular proteinSide 2.. Functionally, part of the Sec protein translocase complex. Interacts with the SecYEG preprotein conducting channel. Has a central role in coupling the hydrolysis of ATP to the transfer of proteins into and across the cell membrane, serving as an ATP-driven molecular motor driving the stepwise translocation of polypeptide chains across the membrane. The polypeptide is Protein translocase subunit SecA (Chlamydia trachomatis serovar L2 (strain ATCC VR-902B / DSM 19102 / 434/Bu)).